The sequence spans 488 residues: Germacrene A hydroxylase (488 aa).

Residues 1-6 (MEVSLT) lie on the Cytoplasmic side of the membrane. A helical; Signal-anchor for type II membrane protein transmembrane segment spans residues 7–23 (TSIALATIVFFLYKLLT). Residues 24-488 (RPTSSKNRLP…KTELMLVPSF (465 aa)) are Lumenal-facing. 4 N-linked (GlcNAc...) asparagine glycosylation sites follow: N169, N260, N379, and N412. C432 is a heme binding site.

The protein belongs to the cytochrome P450 family. Requires heme as cofactor. Expressed in leaf primordia.

Its subcellular location is the endoplasmic reticulum membrane. The catalysed reaction is (+)-(R)-germacrene A + 3 reduced [NADPH--hemoprotein reductase] + 3 O2 = germacra-1(10),4,11(13)-trien-12-oate + 3 oxidized [NADPH--hemoprotein reductase] + 4 H2O + 4 H(+). The protein operates within secondary metabolite biosynthesis; terpenoid biosynthesis. In terms of biological role, involved in the biosynthesis of germacrene-derived sesquiterpene lactones. Catalyzes three consecutive oxidations of germacrene A to produce germacrene A acid. Could also catalyze the three-step oxidation of non-natural substrate amorphadiene to artemisinic acid. The protein is Germacrene A hydroxylase of Helianthus annuus (Common sunflower).